A 423-amino-acid polypeptide reads, in one-letter code: MDNHNSSHQLYKKAMALVLAGGRGSRLYNLTDTRAKPAVYFGGKFRIIDFALSNCLNSGIRRIGVVTQYKSHSLLRHLQRGWGFLRGELNEFIDLLPAQQRVDEEHWYRGTADAVYQNIDILRSYGPEYVIVLAGDHIYKMDYSIMLRDHAQSGYKCTVGCVEIAKEEAYAFGIMGIDENRKITSFIEKPKKNAPTIPGTTDRCYASMGIYIFNSDYLYDLLEEDITNKESSHDFGKDIIPRVVSENQALAHPFSMSCVPRGEGIQPYWRDVGTIDAFWEANLDLAANMPELNIYDKDWPVWTAQEQLPPAKFVPDRNGNHGVITNTLASGGCIVLGSEISKSLMFSKVRVLAGCKIDQCVIMPEVVVGENCRLKKVVIDKGCDIPAGMVIGEDPIEDAKNFYRTDKGVVLVTKKMIDELKEK.

Alpha-D-glucose 1-phosphate-binding positions include Y108, G173, 188–189 (EK), and S207.

The protein belongs to the bacterial/plant glucose-1-phosphate adenylyltransferase family. As to quaternary structure, homotetramer.

The catalysed reaction is alpha-D-glucose 1-phosphate + ATP + H(+) = ADP-alpha-D-glucose + diphosphate. Its pathway is glycan biosynthesis; glycogen biosynthesis. Functionally, involved in the biosynthesis of ADP-glucose, a building block required for the elongation reactions to produce glycogen. Catalyzes the reaction between ATP and alpha-D-glucose 1-phosphate (G1P) to produce pyrophosphate and ADP-Glc. This Francisella tularensis subsp. novicida (strain U112) protein is Glucose-1-phosphate adenylyltransferase.